The following is a 397-amino-acid chain: 4-hydroxybenzoate polyprenyltransferase, mitochondrial (397 aa).

The transit peptide at 1–14 (MFAVRHLLKSRKHF) directs the protein to the mitochondrion. Transmembrane regions (helical) follow at residues 96–116 (IGTYLLFWPCAWSIALSADAG), 121–141 (LTMLGLFGTGALIMRGAGCTI), 169–189 (FDAIVFLSAQLSLGLLVLVQL), 190–210 (NWQSILLGASSLGLVITYPLM), 213–233 (VTYWPQLVLGMAFNWGALLGW), 242–262 (LAACLPLYLSGVCWTIVYDTI), 289–309 (VWLSGFTAAMLTGLSTAGWAC), 313–333 (LPYYAAVGVVGAHLVQQIYSL), and 345–365 (FLSNHQVGLILFLGIVLGTLL).

This sequence belongs to the UbiA prenyltransferase family. Mg(2+) is required as a cofactor.

The protein resides in the mitochondrion inner membrane. It catalyses the reaction an all-trans-polyprenyl diphosphate + 4-hydroxybenzoate = a 4-hydroxy-3-(all-trans-polyprenyl)benzoate + diphosphate. Its pathway is cofactor biosynthesis; ubiquinone biosynthesis. In terms of biological role, catalyzes the prenylation of para-hydroxybenzoate (PHB) with an all-trans polyprenyl group. Mediates the second step in the final reaction sequence of coenzyme Q (CoQ) biosynthesis, which is the condensation of the polyisoprenoid side chain with PHB, generating the first membrane-bound Q intermediate. The chain is 4-hydroxybenzoate polyprenyltransferase, mitochondrial from Drosophila pseudoobscura pseudoobscura (Fruit fly).